The sequence spans 146 residues: Nuclear export protein (146 aa).

Interacts with host HSC70.

The protein resides in the host cytoplasm. In terms of biological role, may mediate the nuclear export of encapsidated genomic RNAs (ribonucleoproteins, RNPs). Interaction of viral NEP with M1-Hsc70 is thought to promote nuclear export of the viral encapsidated genomes. In Infectious salmon anemia virus (isolate Atlantic salmon/Norway/810/9/99) (ISAV), this protein is Nuclear export protein.